A 46-amino-acid polypeptide reads, in one-letter code: Large ribosomal subunit protein bL36 (46 aa).

Belongs to the bacterial ribosomal protein bL36 family.

This is Large ribosomal subunit protein bL36 from Klebsiella pneumoniae (strain 342).